A 109-amino-acid chain; its full sequence is Defensin-B5 (109 aa).

The N-terminal stretch at 1 to 20 (MRGLLPFLFLLSFFLSPIQA) is a signal peptide. The tract at residues 21–44 (QPEGREEELEETWSEDRDQAPPRV) is disordered. The propeptide occupies 21 to 70 (QPEGREEELEETWSEDRDQAPPRVVEESEVVGAENEAGLAAGRSYPWIIL). Basic and acidic residues predominate over residues 34 to 44 (SEDRDQAPPRV). 3 disulfides stabilise this stretch: Cys73–Cys101, Cys80–Cys95, and Cys85–Cys102. Residues 107-109 (AVP) constitute a propeptide that is removed on maturation.

Belongs to the beta-defensin family. Highly expressed in kidney, and expressed at lower levels in testis.

It is found in the secreted. Has antimicrobial activity. This Ornithorhynchus anatinus (Duckbill platypus) protein is Defensin-B5.